We begin with the raw amino-acid sequence, 145 residues long: D-aminoacyl-tRNA deacylase (145 aa).

Residues 137-138 (GP) carry the Gly-cisPro motif, important for rejection of L-amino acids motif.

This sequence belongs to the DTD family. As to quaternary structure, homodimer.

Its subcellular location is the cytoplasm. The catalysed reaction is glycyl-tRNA(Ala) + H2O = tRNA(Ala) + glycine + H(+). It carries out the reaction a D-aminoacyl-tRNA + H2O = a tRNA + a D-alpha-amino acid + H(+). Its function is as follows. An aminoacyl-tRNA editing enzyme that deacylates mischarged D-aminoacyl-tRNAs. Also deacylates mischarged glycyl-tRNA(Ala), protecting cells against glycine mischarging by AlaRS. Acts via tRNA-based rather than protein-based catalysis; rejects L-amino acids rather than detecting D-amino acids in the active site. By recycling D-aminoacyl-tRNA to D-amino acids and free tRNA molecules, this enzyme counteracts the toxicity associated with the formation of D-aminoacyl-tRNA entities in vivo and helps enforce protein L-homochirality. This Salmonella typhimurium (strain LT2 / SGSC1412 / ATCC 700720) protein is D-aminoacyl-tRNA deacylase.